Here is a 419-residue protein sequence, read N- to C-terminus: Peptide chain release factor subunit 1 (419 aa).

The protein belongs to the eukaryotic release factor 1 family. Heterodimer of two subunits, one of which binds GTP.

It localises to the cytoplasm. Functionally, directs the termination of nascent peptide synthesis (translation) in response to the termination codons UAA, UAG and UGA. In Methanococcus maripaludis (strain C6 / ATCC BAA-1332), this protein is Peptide chain release factor subunit 1.